A 233-amino-acid polypeptide reads, in one-letter code: Chalcone--flavanone isomerase (233 aa).

Residues threonine 47, asparagine 113, and serine 192 each coordinate substrate.

The protein belongs to the chalcone isomerase family.

It catalyses the reaction a chalcone = a flavanone.. Its pathway is secondary metabolite biosynthesis; flavonoid biosynthesis. In terms of biological role, catalyzes the intramolecular cyclization of bicyclic chalcones into tricyclic (S)-flavanones. Responsible for the isomerization of 4,2',4',6'-tetrahydroxychalcone (also termed chalcone) into naringenin. This Oryza sativa subsp. japonica (Rice) protein is Chalcone--flavanone isomerase (CHI).